The following is a 177-amino-acid chain: Adenylyl-sulfate kinase (177 aa).

Residue 12-19 participates in ATP binding; sequence GLSGAGKT. Serine 86 acts as the Phosphoserine intermediate in catalysis.

The protein belongs to the APS kinase family.

The enzyme catalyses adenosine 5'-phosphosulfate + ATP = 3'-phosphoadenylyl sulfate + ADP + H(+). Its pathway is sulfur metabolism; hydrogen sulfide biosynthesis; sulfite from sulfate: step 2/3. Functionally, catalyzes the synthesis of activated sulfate. This is Adenylyl-sulfate kinase from Picosynechococcus sp. (strain ATCC 27264 / PCC 7002 / PR-6) (Agmenellum quadruplicatum).